The primary structure comprises 247 residues: Programmed cell death 1 ligand 2 (247 aa).

An N-terminal signal peptide occupies residues 1–19 (MLLLLPILNLSLQLHPVAA). Over 20-221 (LFTVTAPKEV…RMEPKVPRTW (202 aa)) the chain is Extracellular. An Ig-like V-type domain is found at 21–118 (FTVTAPKEVY…AWDYKYLTVK (98 aa)). 2 disulfides stabilise this stretch: Cys42-Cys102 and Cys143-Cys192. N-linked (GlcNAc...) asparagine glycosylation is found at Asn64, Asn157, Asn163, and Asn189. One can recognise an Ig-like C2-type domain in the interval 122 to 203 (SYMRIDTRIL…FWNAHMKELT (82 aa)). A helical membrane pass occupies residues 222–242 (PLHVFIPACTIALIFLAIVII). Topologically, residues 243 to 247 (QRKRI) are cytoplasmic.

The protein belongs to the immunoglobulin superfamily. BTN/MOG family. As to quaternary structure, interacts with PDCD1. Expressed in immature and mature bone marrow-derived dendritic cells and splenic dendritic cells. Highly expressed in placenta, liver and weakly expressed in heart, spleen, lymph nodes and thymus. Also expressed in some tumor cell lines of lymphoid origin.

Its subcellular location is the cell membrane. Functionally, involved in the costimulatory signal essential for T-cell proliferation and IFNG production in a PDCD1-independent manner. Interaction with PDCD1 inhibits T-cell proliferation by blocking cell cycle progression and cytokine production. In Mus musculus (Mouse), this protein is Programmed cell death 1 ligand 2 (Pdcd1lg2).